The sequence spans 808 residues: Anaphase-promoting complex subunit 4 (808 aa).

Phosphotyrosine is present on Tyr-469. Phosphoserine occurs at positions 757 and 758. Residue Lys-772 forms a Glycyl lysine isopeptide (Lys-Gly) (interchain with G-Cter in SUMO2) linkage. A phosphoserine mark is found at Ser-777 and Ser-779. Lys-798 is covalently cross-linked (Glycyl lysine isopeptide (Lys-Gly) (interchain with G-Cter in SUMO2)).

It belongs to the APC4 family. As to quaternary structure, the mammalian APC/C is composed at least of 14 distinct subunits ANAPC1, ANAPC2, CDC27/APC3, ANAPC4, ANAPC5, CDC16/APC6, ANAPC7, CDC23/APC8, ANAPC10, ANAPC11, CDC26/APC12, ANAPC13, ANAPC15 and ANAPC16 that assemble into a complex of at least 19 chains with a combined molecular mass of around 1.2 MDa; APC/C interacts with FZR1 and FBXO5. In the context of the APC/C complex, directly interacts with UBE2S. Interacts with FBXO43.

The protein localises to the nucleus. Its pathway is protein modification; protein ubiquitination. Component of the anaphase promoting complex/cyclosome (APC/C), a cell cycle-regulated E3 ubiquitin ligase that controls progression through mitosis and the G1 phase of the cell cycle. The APC/C complex acts by mediating ubiquitination and subsequent degradation of target proteins: it mainly mediates the formation of 'Lys-11'-linked polyubiquitin chains and, to a lower extent, the formation of 'Lys-48'- and 'Lys-63'-linked polyubiquitin chains. The APC/C complex catalyzes assembly of branched 'Lys-11'-/'Lys-48'-linked branched ubiquitin chains on target proteins. This is Anaphase-promoting complex subunit 4 (ANAPC4) from Homo sapiens (Human).